Consider the following 85-residue polypeptide: Large ribosomal subunit protein bL27 (85 aa).

The tract at residues 1–26 is disordered; sequence MAHKKGVGSSRNGRDSNPKMLGVKRF.

The protein belongs to the bacterial ribosomal protein bL27 family.

The chain is Large ribosomal subunit protein bL27 from Roseiflexus sp. (strain RS-1).